The sequence spans 24 residues: Acidic phospholipase A2 4 (24 aa).

This sequence belongs to the phospholipase A2 family. Group II subfamily. It depends on Ca(2+) as a cofactor. As to expression, expressed by the venom gland.

The protein localises to the secreted. The enzyme catalyses a 1,2-diacyl-sn-glycero-3-phosphocholine + H2O = a 1-acyl-sn-glycero-3-phosphocholine + a fatty acid + H(+). In terms of biological role, PLA2 catalyzes the calcium-dependent hydrolysis of the 2-acyl groups in 3-sn-phosphoglycerides. The protein is Acidic phospholipase A2 4 of Trimeresurus stejnegeri (Chinese green tree viper).